Reading from the N-terminus, the 202-residue chain is Thymidylate kinase (202 aa).

Residue 7-14 (GIDGSGKT) coordinates ATP.

Belongs to the thymidylate kinase family.

It carries out the reaction dTMP + ATP = dTDP + ADP. In terms of biological role, phosphorylation of dTMP to form dTDP in both de novo and salvage pathways of dTTP synthesis. The polypeptide is Thymidylate kinase (Ehrlichia chaffeensis (strain ATCC CRL-10679 / Arkansas)).